We begin with the raw amino-acid sequence, 219 residues long: PKHD-type hydroxylase Mmar10_1675 (219 aa).

Residues 77–171 (TLSRILVSRY…RVAVVGWVRS (95 aa)) enclose the Fe2OG dioxygenase domain. His-95, Asp-97, and His-152 together coordinate Fe cation. Arg-162 serves as a coordination point for 2-oxoglutarate.

It depends on Fe(2+) as a cofactor. L-ascorbate serves as cofactor.

The polypeptide is PKHD-type hydroxylase Mmar10_1675 (Maricaulis maris (strain MCS10) (Caulobacter maris)).